The sequence spans 240 residues: UDP-2,3-diacylglucosamine hydrolase (240 aa).

The Mn(2+) site is built by D9, H11, D43, N81, and H116. 81–82 (NR) is a substrate binding site. D124, S162, K166, K169, and H197 together coordinate substrate. H197 and H199 together coordinate Mn(2+).

The protein belongs to the LpxH family. Mn(2+) serves as cofactor.

The protein localises to the cell inner membrane. It catalyses the reaction UDP-2-N,3-O-bis[(3R)-3-hydroxytetradecanoyl]-alpha-D-glucosamine + H2O = 2-N,3-O-bis[(3R)-3-hydroxytetradecanoyl]-alpha-D-glucosaminyl 1-phosphate + UMP + 2 H(+). The protein operates within glycolipid biosynthesis; lipid IV(A) biosynthesis; lipid IV(A) from (3R)-3-hydroxytetradecanoyl-[acyl-carrier-protein] and UDP-N-acetyl-alpha-D-glucosamine: step 4/6. Its function is as follows. Hydrolyzes the pyrophosphate bond of UDP-2,3-diacylglucosamine to yield 2,3-diacylglucosamine 1-phosphate (lipid X) and UMP by catalyzing the attack of water at the alpha-P atom. Involved in the biosynthesis of lipid A, a phosphorylated glycolipid that anchors the lipopolysaccharide to the outer membrane of the cell. The chain is UDP-2,3-diacylglucosamine hydrolase from Neisseria meningitidis serogroup A / serotype 4A (strain DSM 15465 / Z2491).